Reading from the N-terminus, the 689-residue chain is Glycine--tRNA ligase beta subunit (689 aa).

Belongs to the class-II aminoacyl-tRNA synthetase family. As to quaternary structure, tetramer of two alpha and two beta subunits.

It localises to the cytoplasm. It catalyses the reaction tRNA(Gly) + glycine + ATP = glycyl-tRNA(Gly) + AMP + diphosphate. The sequence is that of Glycine--tRNA ligase beta subunit from Klebsiella pneumoniae subsp. pneumoniae (strain ATCC 700721 / MGH 78578).